Here is an 80-residue protein sequence, read N- to C-terminus: Spermatid-specific protein S2 (80 aa).

Positions 1–36 are enriched in basic residues; that stretch reads VKSRYHQRQYRARKRYAKARRTKKPKRRPKPPRKLR. A disordered region spans residues 1-44; it reads VKSRYHQRQYRARKRYAKARRTKKPKRRPKPPRKLRYAPSKKQP.

The protein localises to the nucleus. It localises to the chromosome. In terms of biological role, involved in nuclear basic protein transition: histones are replaced by spermatid specific proteins which are themselves replaced by protamines in late spermatids. This Scyliorhinus canicula (Small-spotted catshark) protein is Spermatid-specific protein S2.